The chain runs to 374 residues: tRNA N6-adenosine threonylcarbamoyltransferase (374 aa).

H117 and H121 together coordinate Fe cation. Residues 140–144, D174, G187, D191, and N283 contribute to the substrate site; that span reads LVSGG. Fe cation is bound at residue D311. Residues 337–352 are compositionally biased toward low complexity; it reads ADSSLPVTEPHVPGQG. The tract at residues 337–374 is disordered; the sequence is ADSSLPVTEPHVPGQGHPHGHPHGHDHVHEVSKENLYS. Basic and acidic residues predominate over residues 359–374; the sequence is HGHDHVHEVSKENLYS.

This sequence belongs to the KAE1 / TsaD family. It depends on Fe(2+) as a cofactor.

Its subcellular location is the cytoplasm. It carries out the reaction L-threonylcarbamoyladenylate + adenosine(37) in tRNA = N(6)-L-threonylcarbamoyladenosine(37) in tRNA + AMP + H(+). In terms of biological role, required for the formation of a threonylcarbamoyl group on adenosine at position 37 (t(6)A37) in tRNAs that read codons beginning with adenine. Is involved in the transfer of the threonylcarbamoyl moiety of threonylcarbamoyl-AMP (TC-AMP) to the N6 group of A37, together with TsaE and TsaB. TsaD likely plays a direct catalytic role in this reaction. This Streptomyces coelicolor (strain ATCC BAA-471 / A3(2) / M145) protein is tRNA N6-adenosine threonylcarbamoyltransferase.